Here is a 440-residue protein sequence, read N- to C-terminus: Transposon Ty1-ML1 Gag polyprotein (440 aa).

3 stretches are compositionally biased toward polar residues: residues 1 to 23 (MESQQLSNYPNISHGSACASVTS), 48 to 60 (TKANSQQTTTPAS), and 127 to 152 (QSQFPQYPSSVGTPLSTPSPESGNTF). Disordered regions lie at residues 1–88 (MESQ…YPQQ), 126–173 (PQSQ…RPPP), and 352–440 (GSRN…PETY). A compositionally biased stretch (low complexity) spans 153–165 (TDSSSADSDMTST). Residues 299 to 401 (NNGIHINNKV…NSKSKTARAH (103 aa)) are RNA-binding. A compositionally biased stretch (low complexity) spans 402-418 (NVSTSNNSPSTDNDSIS). S416 is subject to Phosphoserine. Positions 419 to 428 (KSTTEPIQLN) are enriched in polar residues. Residues 429-440 (NKHDLHLRPETY) are compositionally biased toward basic and acidic residues.

In terms of assembly, homotrimer.

The protein resides in the cytoplasm. Its function is as follows. Capsid protein (CA) is the structural component of the virus-like particle (VLP), forming the shell that encapsulates the retrotransposons dimeric RNA genome. The particles are assembled from trimer-clustered units and there are holes in the capsid shells that allow for the diffusion of macromolecules. CA also has nucleocapsid-like chaperone activity, promoting primer tRNA(i)-Met annealing to the multipartite primer-binding site (PBS), dimerization of Ty1 RNA and initiation of reverse transcription. The polypeptide is Transposon Ty1-ML1 Gag polyprotein (TY1A-ML1) (Saccharomyces cerevisiae (strain ATCC 204508 / S288c) (Baker's yeast)).